A 145-amino-acid polypeptide reads, in one-letter code: uncharacterized protein (145 aa).

This is an uncharacterized protein from Bacillus anthracis.